The primary structure comprises 136 residues: Putative pre-16S rRNA nuclease (136 aa).

Belongs to the YqgF nuclease family.

Its subcellular location is the cytoplasm. Could be a nuclease involved in processing of the 5'-end of pre-16S rRNA. In Francisella tularensis subsp. novicida (strain U112), this protein is Putative pre-16S rRNA nuclease.